The chain runs to 156 residues: Small ribosomal subunit protein uS7 (156 aa).

Belongs to the universal ribosomal protein uS7 family. As to quaternary structure, part of the 30S ribosomal subunit. Contacts proteins S9 and S11.

Its function is as follows. One of the primary rRNA binding proteins, it binds directly to 16S rRNA where it nucleates assembly of the head domain of the 30S subunit. Is located at the subunit interface close to the decoding center, probably blocks exit of the E-site tRNA. This chain is Small ribosomal subunit protein uS7, found in Citrifermentans bemidjiense (strain ATCC BAA-1014 / DSM 16622 / JCM 12645 / Bem) (Geobacter bemidjiensis).